A 356-amino-acid polypeptide reads, in one-letter code: tRNA N6-adenosine threonylcarbamoyltransferase (356 aa).

Residues histidine 115 and histidine 119 each coordinate Fe cation. Substrate is bound by residues 138-142, aspartate 171, glycine 184, and asparagine 283; that span reads LVSGG. Position 311 (aspartate 311) interacts with Fe cation.

This sequence belongs to the KAE1 / TsaD family. It depends on Fe(2+) as a cofactor.

It is found in the cytoplasm. It carries out the reaction L-threonylcarbamoyladenylate + adenosine(37) in tRNA = N(6)-L-threonylcarbamoyladenosine(37) in tRNA + AMP + H(+). Its function is as follows. Required for the formation of a threonylcarbamoyl group on adenosine at position 37 (t(6)A37) in tRNAs that read codons beginning with adenine. Is involved in the transfer of the threonylcarbamoyl moiety of threonylcarbamoyl-AMP (TC-AMP) to the N6 group of A37, together with TsaE and TsaB. TsaD likely plays a direct catalytic role in this reaction. The sequence is that of tRNA N6-adenosine threonylcarbamoyltransferase from Synechococcus sp. (strain WH7803).